We begin with the raw amino-acid sequence, 156 residues long: Ribosome maturation factor RimP (156 aa).

It belongs to the RimP family.

Its subcellular location is the cytoplasm. Required for maturation of 30S ribosomal subunits. This Anoxybacillus flavithermus (strain DSM 21510 / WK1) protein is Ribosome maturation factor RimP.